A 155-amino-acid chain; its full sequence is UPF0251 protein Paes_1249 (155 aa).

The protein belongs to the UPF0251 family.

The chain is UPF0251 protein Paes_1249 from Prosthecochloris aestuarii (strain DSM 271 / SK 413).